The sequence spans 338 residues: Lipoate-protein ligase A (338 aa).

The region spanning 29-216 is the BPL/LPL catalytic domain; sequence PATQRVLFLW…AFFAHYGERV (188 aa). Residues arginine 71, 76–79, and lysine 134 each bind ATP; that span reads GAVF. Lysine 134 serves as a coordination point for (R)-lipoate.

It belongs to the LplA family. As to quaternary structure, monomer.

It is found in the cytoplasm. It carries out the reaction L-lysyl-[lipoyl-carrier protein] + (R)-lipoate + ATP = N(6)-[(R)-lipoyl]-L-lysyl-[lipoyl-carrier protein] + AMP + diphosphate + H(+). Its pathway is protein modification; protein lipoylation via exogenous pathway; protein N(6)-(lipoyl)lysine from lipoate: step 1/2. It functions in the pathway protein modification; protein lipoylation via exogenous pathway; protein N(6)-(lipoyl)lysine from lipoate: step 2/2. Catalyzes both the ATP-dependent activation of exogenously supplied lipoate to lipoyl-AMP and the transfer of the activated lipoyl onto the lipoyl domains of lipoate-dependent enzymes. The protein is Lipoate-protein ligase A of Escherichia coli O157:H7.